The sequence spans 339 residues: Phenylalanine--tRNA ligase alpha subunit (339 aa).

Mg(2+) is bound at residue Glu254.

This sequence belongs to the class-II aminoacyl-tRNA synthetase family. Phe-tRNA synthetase alpha subunit type 1 subfamily. Tetramer of two alpha and two beta subunits. Mg(2+) serves as cofactor.

Its subcellular location is the cytoplasm. It catalyses the reaction tRNA(Phe) + L-phenylalanine + ATP = L-phenylalanyl-tRNA(Phe) + AMP + diphosphate + H(+). This Acetivibrio thermocellus (strain ATCC 27405 / DSM 1237 / JCM 9322 / NBRC 103400 / NCIMB 10682 / NRRL B-4536 / VPI 7372) (Clostridium thermocellum) protein is Phenylalanine--tRNA ligase alpha subunit.